The chain runs to 338 residues: Ketol-acid reductoisomerase (NADP(+)) (338 aa).

The KARI N-terminal Rossmann domain maps to 1–181 (MKVSYDKDCD…GGGRTGIIET (181 aa)). Residues 24 to 27 (YGSQ), arginine 47, serine 50, serine 52, and 82 to 85 (DEFQ) contribute to the NADP(+) site. Histidine 107 is an active-site residue. Glycine 133 serves as a coordination point for NADP(+). The KARI C-terminal knotted domain maps to 182 to 327 (TFKDETETDL…EKLRAMMPWI (146 aa)). 4 residues coordinate Mg(2+): aspartate 190, glutamate 194, glutamate 226, and glutamate 230. Serine 251 lines the substrate pocket.

Belongs to the ketol-acid reductoisomerase family. Requires Mg(2+) as cofactor.

The catalysed reaction is (2R)-2,3-dihydroxy-3-methylbutanoate + NADP(+) = (2S)-2-acetolactate + NADPH + H(+). The enzyme catalyses (2R,3R)-2,3-dihydroxy-3-methylpentanoate + NADP(+) = (S)-2-ethyl-2-hydroxy-3-oxobutanoate + NADPH + H(+). It participates in amino-acid biosynthesis; L-isoleucine biosynthesis; L-isoleucine from 2-oxobutanoate: step 2/4. It functions in the pathway amino-acid biosynthesis; L-valine biosynthesis; L-valine from pyruvate: step 2/4. In terms of biological role, involved in the biosynthesis of branched-chain amino acids (BCAA). Catalyzes an alkyl-migration followed by a ketol-acid reduction of (S)-2-acetolactate (S2AL) to yield (R)-2,3-dihydroxy-isovalerate. In the isomerase reaction, S2AL is rearranged via a Mg-dependent methyl migration to produce 3-hydroxy-3-methyl-2-ketobutyrate (HMKB). In the reductase reaction, this 2-ketoacid undergoes a metal-dependent reduction by NADPH to yield (R)-2,3-dihydroxy-isovalerate. In Stutzerimonas stutzeri (strain A1501) (Pseudomonas stutzeri), this protein is Ketol-acid reductoisomerase (NADP(+)).